Here is a 1004-residue protein sequence, read N- to C-terminus: Protein phosphatase 1 regulatory subunit 12A (1004 aa).

The interval 35-38 (KVKF) is important for interaction with PPP1CB. ANK repeat units lie at residues 39 to 68 (DDGA…DINY), 72 to 101 (DGLT…NINQ), 105 to 134 (EGWI…HVGA), 138 to 164 (EGDT…RQGV), 198 to 227 (SGGT…DVNI), and 231 to 260 (DGWT…DMEA). Residues 291 to 300 (HSEKREKKSP) show a composition bias toward basic and acidic residues. Residues 291–920 (HSEKREKKSP…SYLEDRKPYC (630 aa)) are disordered. Polar residues predominate over residues 302 to 316 (IESTANLDNNQTQKT). 2 stretches are compositionally biased toward basic and acidic residues: residues 318 to 329 (KNKETLIMEQEK) and 336 to 353 (SLEH…KDES). The segment covering 357–369 (SEEEEDDDSESEA) has biased composition (acidic residues). Residues 378–392 (ANANTTSTQSASMTA) are compositionally biased toward polar residues. Residues 417 to 427 (SPKEEERKDES) are compositionally biased toward basic and acidic residues. Residues 464–475 (RSASSPRLSSSL) are compositionally biased toward low complexity. A compositionally biased stretch (basic and acidic residues) spans 476 to 486 (DNKEKEKDGKG). Residues 514–525 (SSASSIRSGSSY) are compositionally biased toward low complexity. Residues 528-538 (RKWEEDVKKNS) are compositionally biased toward basic and acidic residues. Polar residues predominate over residues 539 to 554 (LNEGPTSLNTSYQRSG). Low complexity-rich tracts occupy residues 564–578 (VSSN…VTSS) and 587–602 (ASAN…STSA). The segment covering 613-624 (WAEDSTEKEKDS) has biased composition (basic and acidic residues). Positions 625–659 (VPTAVTVPVAPSVVNAAATTTAMTTATSGTVSSTS) are enriched in low complexity. A compositionally biased stretch (basic and acidic residues) spans 672 to 681 (VRDEESESQR). Residues 682 to 692 (KARSRQARQSR) show a composition bias toward basic residues. A Phosphothreonine; by ROCK2 modification is found at Thr-695. Residues 717-765 (RTREQENEEKEKEEKEKQDKEKQEEKKESETKDDDYRQRYSRTVEEPYH) show a composition bias toward basic and acidic residues. A compositionally biased stretch (low complexity) spans 770–793 (TSTSTSTSSTSSLSTSTSSLSSSS). Polar residues predominate over residues 794-808 (QLNRPNSLIGITSAY). Residues 812-837 (GTKESEREGGKKEEEKEEDKSQPKSI) show a composition bias toward basic and acidic residues. Basic residues predominate over residues 838–849 (RERRRPREKRRS). A Phosphothreonine; by ROCK2 modification is found at Thr-850. Over residues 864-880 (QEHQSDSEEGTNKKETQ) the composition is skewed to basic and acidic residues. A compositionally biased stretch (polar residues) spans 881-896 (SDSLSRYDTGSLSVSS).

As to quaternary structure, PP1 comprises a catalytic subunit, PPP1CA, PPP1CB or PPP1CC, and one or several targeting or regulatory subunits. PPP1R12A mediates binding to myosin. Post-translationally, phosphorylated by CIT (Rho-associated kinase) and by ROCK2 on serine and threonine residues. Phosphorylation at Thr-695 leads to inhibition of myosin phosphatase activity. Phosphorylation at Thr-850 abolishes myosin binding. May be phosphorylated at Thr-695 by DMPK; may inhibit the myosin phosphatase activity. In terms of tissue distribution, detected in brain, lung, aorta, heart, gizzard, stomach, oviduct, spleen, kidney and small intestine.

It localises to the cytoplasm. It is found in the cytoskeleton. The protein localises to the stress fiber. Its function is as follows. Regulates myosin phosphatase activity. In Gallus gallus (Chicken), this protein is Protein phosphatase 1 regulatory subunit 12A (PPP1R12A).